A 210-amino-acid chain; its full sequence is Probable peroxygenase 7 (210 aa).

The tract at residues 1-24 (MSHQTVALASKAKSPKPKRGKLDK) is disordered. Residues 25 to 60 (EKMTALEKHVSFFDRNKDGTVYPWETYQGFRALGTG) form the EF-hand domain. Histidine 33 lines the heme pocket. Ca(2+)-binding residues include aspartate 38, asparagine 40, aspartate 42, threonine 44, and glutamate 49. The short motif at 81–90 (PGKGFSPLFP) is the Proline-knot element. A Phosphoserine modification is found at serine 188.

The protein belongs to the caleosin family. Homodimer. Heme b is required as a cofactor. Ca(2+) serves as cofactor. In terms of tissue distribution, expressed in pollen coat.

The protein resides in the secreted. The enzyme catalyses RH + ROOH = ROH + ROH.. Probable calcium-binding peroxygenase. May be involved in pollination. The sequence is that of Probable peroxygenase 7 (PXG7) from Arabidopsis thaliana (Mouse-ear cress).